A 30-amino-acid chain; its full sequence is Cliotide T19 (30 aa).

The cyclopeptide (Gly-Asn) cross-link spans Gly-1 to Asn-30. Intrachain disulfides connect Cys-6–Cys-20, Cys-10–Cys-22, and Cys-15–Cys-27.

In terms of processing, contains 3 disulfide bonds. This is a cyclic peptide. Expressed in root nodules but not in seed.

Functionally, probably participates in a plant defense mechanism. Active against Gram-negative bacterium E.coli ATCC 700926 (MIC=0.6 uM) under low-salt conditions. Not active against Gram-positive bacterium S.aureus ATCC 12600 up to a concentration of 100 uM under low-salt conditions. Exhibits immunomodulatory activity but no cytotoxicity in vitro. The chain is Cliotide T19 from Clitoria ternatea (Butterfly pea).